We begin with the raw amino-acid sequence, 318 residues long: Galactinol synthase 1 (318 aa).

Residue K102 is part of the active site. The Mn(2+) site is built by D118, D120, and H244.

The protein belongs to the glycosyltransferase 8 family. Galactosyltransferase subfamily. Requires a divalent metal cation as cofactor. In terms of tissue distribution, expressed in seeds, mostly in radicle tips.

It localises to the cytoplasm. It carries out the reaction myo-inositol + UDP-alpha-D-galactose = alpha-D-galactosyl-(1-&gt;3)-1D-myo-inositol + UDP + H(+). Galactinol synthase involved in the biosynthesis of raffinose family oligosaccharides (RFOs) that function as osmoprotectants. May promote plant stress tolerance. This is Galactinol synthase 1 (GOLS1) from Solanum lycopersicum (Tomato).